The primary structure comprises 843 residues: Neuroligin-1 (843 aa).

Positions 1–45 (MALPRCMWPNYVWRAMMACVVHRGSGAPLTLCLLGCLLQTFHVLS) are cleaved as a signal peptide. Residues 46–697 (QKLDDVDPLV…DQRDYSTELS (652 aa)) lie on the Extracellular side of the membrane. N-linked (GlcNAc...) (complex) asparagine glycosylation is present at Asn-109. 2 disulfide bridges follow: Cys-117-Cys-153 and Cys-172-Cys-181. Asn-303 and Asn-343 each carry an N-linked (GlcNAc...) (complex) asparagine glycan. Cystine bridges form between Cys-342–Cys-353 and Cys-512–Cys-546. A glycan (N-linked (GlcNAc...) asparagine) is linked at Asn-547. The interval 647–688 (TKVPSTDITLRPTRKNSTPVTSAFPTAKQDDPKQQPSPFSVD) is disordered. Residues 661 to 670 (KNSTPVTSAF) are compositionally biased toward polar residues. Residues Ser-683 and Ser-686 are each glycosylated (O-linked (GalNAc...) serine). Residues 698-718 (VTIAVGASLLFLNILAFAALY) traverse the membrane as a helical segment. The Cytoplasmic segment spans residues 719-843 (YKKDKRRHDV…HPHSHSTTRV (125 aa)). The tract at residues 822–843 (GGQNNTLPHPHPHPHSHSTTRV) is disordered. The span at 831-843 (PHPHPHSHSTTRV) shows a compositional bias: basic residues.

It belongs to the type-B carboxylesterase/lipase family. In terms of assembly, interacts with neurexins NRXN1, NRXN2 and NRXN3. Interaction with neurexins is mediated by heparan sulfate glycan modification on neurexin. Interacts with NLGN3. Interacts (via its C-terminus) with DLG4/PSD-95 (via PDZ domain 3). Interacts with GOPC. Interacts with AIP1 and PDZRN3. The N-terminus is blocked. In terms of tissue distribution, expressed in brain, almost exclusively in neurons, and spinal cord. Detected in pancreas islet beta cells.

The protein localises to the cell membrane. It is found in the postsynaptic density. It localises to the synaptic cleft. Its subcellular location is the synaptic cell membrane. Cell surface protein involved in cell-cell-interactions via its interactions with neurexin family members. Plays a role in synapse function and synaptic signal transmission, and probably mediates its effects by recruiting and clustering other synaptic proteins. May promote the initial formation of synapses, but is not essential for this. In vitro, triggers the de novo formation of presynaptic structures. May be involved in specification of excitatory synapses. Required to maintain wakefulness quality and normal synchrony of cerebral cortex activity during wakefulness and sleep. The protein is involved in nervous system development. The sequence is that of Neuroligin-1 (Nlgn1) from Rattus norvegicus (Rat).